Here is a 421-residue protein sequence, read N- to C-terminus: UDP-N-acetylglucosamine 1-carboxyvinyltransferase 2 (421 aa).

Residue 22–23 (KN) participates in phosphoenolpyruvate binding. Residue Arg-95 participates in UDP-N-acetyl-alpha-D-glucosamine binding. Cys-119 serves as the catalytic Proton donor. A 2-(S-cysteinyl)pyruvic acid O-phosphothioketal modification is found at Cys-119. UDP-N-acetyl-alpha-D-glucosamine is bound by residues 124-128 (RPIEQ), Asp-308, and Val-330.

It belongs to the EPSP synthase family. MurA subfamily.

It localises to the cytoplasm. It carries out the reaction phosphoenolpyruvate + UDP-N-acetyl-alpha-D-glucosamine = UDP-N-acetyl-3-O-(1-carboxyvinyl)-alpha-D-glucosamine + phosphate. The protein operates within cell wall biogenesis; peptidoglycan biosynthesis. Cell wall formation. Adds enolpyruvyl to UDP-N-acetylglucosamine. The sequence is that of UDP-N-acetylglucosamine 1-carboxyvinyltransferase 2 from Staphylococcus haemolyticus (strain JCSC1435).